A 362-amino-acid chain; its full sequence is Peptide chain release factor 1 (362 aa).

Q240 carries the post-translational modification N5-methylglutamine.

Belongs to the prokaryotic/mitochondrial release factor family. In terms of processing, methylated by PrmC. Methylation increases the termination efficiency of RF1.

The protein resides in the cytoplasm. Functionally, peptide chain release factor 1 directs the termination of translation in response to the peptide chain termination codons UAG and UAA. The polypeptide is Peptide chain release factor 1 (Bifidobacterium longum (strain DJO10A)).